Here is a 209-residue protein sequence, read N- to C-terminus: Outer-membrane lipoprotein LolB (209 aa).

The first 17 residues, 1–17 (MATVFSRALGALVLGVA), serve as a signal peptide directing secretion. Cys18 carries N-palmitoyl cysteine lipidation. Cys18 carries the S-diacylglycerol cysteine lipid modification.

Belongs to the LolB family. Monomer.

It is found in the cell outer membrane. Functionally, plays a critical role in the incorporation of lipoproteins in the outer membrane after they are released by the LolA protein. The protein is Outer-membrane lipoprotein LolB of Ralstonia nicotianae (strain ATCC BAA-1114 / GMI1000) (Ralstonia solanacearum).